Here is a 663-residue protein sequence, read N- to C-terminus: Polyunsaturated fatty acid lipoxygenase ALOX15 (663 aa).

The region spanning 2-115 (GLYRVRVSTG…ILSLPEGTGR (114 aa)) is the PLAT domain. One can recognise a Lipoxygenase domain in the interval 116–663 (TVVDDPQGLF…PSLVENSVAI (548 aa)). The Fe cation site is built by histidine 361, histidine 366, histidine 541, histidine 545, and isoleucine 663.

The protein belongs to the lipoxygenase family. In terms of assembly, interacts with PEBP1; in response to IL13/interleukin-13, prevents the interaction of PEBP1 with RAF1 to activate the ERK signaling cascade. Fe cation is required as a cofactor. Detected in tracheal epithelium.

It is found in the cytoplasm. It localises to the cytosol. Its subcellular location is the cell membrane. The protein resides in the lipid droplet. It carries out the reaction (5Z,8Z,11Z,14Z)-eicosatetraenoate + O2 = (12S)-hydroperoxy-(5Z,8Z,10E,14Z)-eicosatetraenoate. It catalyses the reaction (5Z,8Z,11Z,14Z)-eicosatetraenoate + O2 = (15S)-hydroperoxy-(5Z,8Z,11Z,13E)-eicosatetraenoate. The catalysed reaction is (9Z,12Z)-octadecadienoate + O2 = (13S)-hydroperoxy-(9Z,11E)-octadecadienoate. The enzyme catalyses (5Z,8Z,11Z,14Z)-eicosatetraenoate + 2 O2 = (14R,15S)-dihydroperoxy-(5Z,8Z,10E,12E)-eicosatetraenoate. It carries out the reaction (5Z,8Z,11Z,14Z)-eicosatetraenoate + 2 O2 = (8S,15S)-dihydroperoxy-(5Z,9E,11Z,13E)-eicosatetraenoate. It catalyses the reaction (14S,15R)-epoxy-(5Z,8Z,11Z)-eicosatrienoate + O2 = (8S)-hydroperoxy-(14S,15R)-epoxy-(5Z,9E,11Z)-eicosatrienoate. The catalysed reaction is (14S,15R)-epoxy-(5Z,8Z,11Z)-eicosatrienoate + O2 = (12S)-hydroperoxy-(14S,15R)-epoxy-(5Z,8Z,10E)-eicosatrienoate. The enzyme catalyses (14R,15S)-epoxy-(5Z,8Z,11Z)-eicosatrienoate + O2 = (5S)-hydroperoxy-(14R,15S)-epoxy-(6E,8Z,11Z)-eicosatrienoate. It carries out the reaction (14R,15S)-epoxy-(5Z,8Z,11Z)-eicosatrienoate + O2 = (12S)-hydroperoxy-(14R,15S)-epoxy-(5Z,8Z,10E)-eicosatrienoate. It catalyses the reaction (15R)-hydroperoxy-(5Z,8Z,11Z,13E)-eicosatetraenoate = 15-oxo-(5Z,8Z,11Z,13E)-eicosatetraenoate + H2O. The catalysed reaction is (15S)-hydroperoxy-(5Z,8Z,11Z,13E)-eicosatetraenoate = (14S,15S)-epoxy-(5Z,8Z,10E,12E)-eicosatetraenoate + H2O. The enzyme catalyses (12S)-hydroperoxy-(5Z,8Z,10E,14Z)-eicosatetraenoate = (8S)-hydroxy-(11S,12S)-epoxy-(5Z,9E,14Z)-eicosatrienoate. It carries out the reaction (4Z,7Z,10Z,13Z,16Z)-docosapentaenoate + O2 = 14-hydroperoxy-(4Z,7Z,10Z,12E,16Z)-docosapentaenoate. It catalyses the reaction (7Z,10Z,13Z,16Z,19Z)-docosapentaenoate + O2 = 14-hydroperoxy-(7Z,10Z,12E,16Z,19Z)-docosapentaenoate. The catalysed reaction is (4Z,7Z,10Z,13Z,16Z,19Z)-docosahexaenoate + O2 = (14S)-hydroperoxy-(4Z,7Z,10Z,12E,16Z,19Z)-docosahexaenoate. The enzyme catalyses (4Z,7Z,10Z,13Z,16Z,19Z)-docosahexaenoate + O2 = (17S)-hydroperoxy-(4Z,7Z,10Z,13Z,15E,19Z)-docosahexaenoate. It carries out the reaction (7S)-hydroperoxy-(4Z,8E,10Z,13Z,16Z,19Z)-docosahexaenoate + O2 = (7S,14S)-dihydroperoxy-(4Z,8E,10Z,12E,16Z,19Z)-docosahexaenoate. It catalyses the reaction (7S)-hydroperoxy-(4Z,8E,10Z,13Z,16Z,19Z)-docosahexaenoate + O2 = (7S,17S)-dihydroperoxy-(4Z,8E,10Z,13Z,15E,19Z)-docosahexaenoate. The catalysed reaction is (4Z,7Z,10Z,13Z,16Z,19Z)-docosahexaenoate + O2 = (11S)-hydroperoxy-(4Z,7Z,9E,13Z,16Z,19Z)-docosahexaenoate. The enzyme catalyses N-(5Z,8Z,11Z,14Z)-eicosatetraenoyl-taurine + O2 = N-(12S)-hydroperoxy-(5Z,8Z,10E,14Z)-eicosatetraenoyl-taurine. It carries out the reaction N-(5Z,8Z,11Z,14Z)-eicosatetraenoyl-gamma-aminobutanoate + O2 = N-(12S)-hydroperoxy-(5Z,8Z,10E,14Z)-eicosatetraenoyl-gamma-aminobutanoate. It catalyses the reaction N-(5Z,8Z,11Z,14Z)-eicosatetraenoyl-glycine + O2 = N-(12S)-hydroperoxy-(5Z,8Z,10E,14Z)-eicosatetraenoyl-glycine. The catalysed reaction is N-(5Z,8Z,11Z,14Z)-eicosatetraenoyl-L-alanine + O2 = N-(12S)-hydroperoxy-(5Z,8Z,10E,14Z)-eicosatetraenoyl-alanine. The enzyme catalyses N-(5Z,8Z,11Z,14Z)-eicosatetraenoyl-taurine + O2 = N-(15S)-hydroperoxy-(5Z,8Z,11Z,13E)-eicosatetraenoyl-taurine. It carries out the reaction N-(5Z,8Z,11Z,14Z)-eicosatetraenoyl-gamma-aminobutanoate + O2 = N-(15S)-hydroperoxy-(5Z,8Z,11Z,13E)-eicosatetraenoyl-gamma-aminobutanoate. It catalyses the reaction N-(5Z,8Z,11Z,14Z)-eicosatetraenoyl-glycine + O2 = N-(15S)-hydroperoxy-(5Z,8Z,11Z,13E)-eicosatetraenoyl-glycine. The catalysed reaction is N-(5Z,8Z,11Z,14Z)-eicosatetraenoyl-L-alanine + O2 = N-(15S)-hydroperoxy-(5Z,8Z,11Z,13E)-eicosatetraenoyl-alanine. The protein operates within lipid metabolism; hydroperoxy eicosatetraenoic acid biosynthesis. Its function is as follows. Non-heme iron-containing dioxygenase that catalyzes the stereo-specific peroxidation of free and esterified polyunsaturated fatty acids generating a spectrum of bioactive lipid mediators. It inserts peroxyl groups at C12 or C15 of arachidonate ((5Z,8Z,11Z,14Z)-eicosatetraenoate) producing both 12-hydroperoxyeicosatetraenoate/12-HPETE and 15-hydroperoxyeicosatetraenoate/15-HPETE. It may then act on 12-HPETE to produce hepoxilins, which may show pro-inflammatory properties. Can also peroxidize linoleate ((9Z,12Z)-octadecadienoate) to 13-hydroperoxyoctadecadienoate. May participate in the sequential oxidations of DHA ((4Z,7Z,10Z,13Z,16Z,19Z)-docosahexaenoate) to generate specialized pro-resolving mediators (SPMs)like resolvin D5 ((7S,17S)-diHPDHA) and (7S,14S)-diHPDHA, that actively down-regulate the immune response and have anti-aggregation properties with platelets. Can convert epoxy fatty acids to hydroperoxy-epoxides derivatives followed by an intramolecular nucleophilic substitution leading to the formation of monocyclic endoperoxides. Plays an important role during the maintenance of self-tolerance by peroxidizing membrane-bound phosphatidylethanolamine which can then signal the sorting process for clearance of apoptotic cells during inflammation and prevent an autoimmune response. In addition to its role in the immune and inflammatory responses, this enzyme may play a role in epithelial wound healing in the cornea through production of lipoxin A4 (LXA(4)) and docosahexaenoic acid-derived neuroprotectin D1 (NPD1; 10R,17S-HDHA), both lipid autacoids exhibit anti-inflammatory and neuroprotective properties. Furthermore, it may regulate actin polymerization which is crucial for several biological processes such as the phagocytosis of apoptotic cells. It is also implicated in the generation of endogenous ligands for peroxisome proliferator activated receptor (PPAR-gamma), hence modulating macrophage development and function. It may also exert a negative effect on skeletal development by regulating bone mass through this pathway. As well as participates in ER stress and downstream inflammation in adipocytes, pancreatic islets, and liver. Finally, it is also involved in the cellular response to IL13/interleukin-13. The sequence is that of Polyunsaturated fatty acid lipoxygenase ALOX15 from Bos taurus (Bovine).